Here is a 407-residue protein sequence, read N- to C-terminus: Snake venom metalloproteinase ACLH (407 aa).

The first 20 residues, 1–20 (MIQVLLVTLCLAAFPYQGSS), serve as a signal peptide directing secretion. A propeptide spanning residues 21-187 (IILESGNVND…PIKKASQLNL (167 aa)) is cleaved from the precursor. Positions 193–389 (RYVELVTVVD…ENPQCILNKP (197 aa)) constitute a Peptidase M12B domain. 2 residues coordinate Ca(2+): glutamate 196 and aspartate 280. Disulfide bonds link cysteine 304–cysteine 384, cysteine 344–cysteine 368, and cysteine 346–cysteine 351. Histidine 329 contributes to the Zn(2+) binding site. Glutamate 330 is a catalytic residue. The Zn(2+) site is built by histidine 333 and histidine 339. The N-linked (GlcNAc...) asparagine glycan is linked to asparagine 367. Cysteine 384 and asparagine 387 together coordinate Ca(2+).

This sequence belongs to the venom metalloproteinase (M12B) family. P-I subfamily. Monomer. Zn(2+) serves as cofactor. Contains sialic acid terminally alpha(2-6)-linked to galactose in a complex N-glycan chain. In terms of tissue distribution, expressed by the venom gland.

The protein localises to the secreted. This zinc hemorrhagic metalloproteinase has fibrino(geno)lytic activities. It causes hemorrhage and has myonecrotic activity on both fiber types I and II. The recombinant enzyme, without post-translational modifications, also has proteolytic activity, but does not show any hemorrhagic activity. The sequence is that of Snake venom metalloproteinase ACLH from Agkistrodon contortrix laticinctus (Broad-banded copperhead).